Consider the following 342-residue polypeptide: Nucleoid-associated protein Sbal223_1817 (342 aa).

This sequence belongs to the YejK family.

It localises to the cytoplasm. The protein resides in the nucleoid. This chain is Nucleoid-associated protein Sbal223_1817, found in Shewanella baltica (strain OS223).